A 217-amino-acid chain; its full sequence is NADPH-dependent 3-demethoxyubiquinone 3-hydroxylase, mitochondrial (217 aa).

A mitochondrion-targeting transit peptide spans methionine 1–phenylalanine 23. 2 repeat units span residues alanine 48–leucine 129 and glycine 130–phenylalanine 217. The segment at alanine 48–phenylalanine 217 is 2 X approximate tandem repeats. Arginine 51 serves as a coordination point for NADH. Positions 60, 90, 93, 142, 178, and 181 each coordinate Fe cation. Residues tyrosine 212 and arginine 216 each contribute to the NADH site.

Belongs to the COQ7 family. As to quaternary structure, component of a multi-subunit COQ enzyme complex. Interacts with COQ8B and COQ6. Interacts with COQ9. Fe cation serves as cofactor. In terms of tissue distribution, highly expressed in tissues with high energy demand such as heart, muscle, liver, and kidney.

The protein localises to the mitochondrion inner membrane. The enzyme catalyses a 5-methoxy-2-methyl-3-(all-trans-polyprenyl)benzoquinone + NADH + O2 = a 3-demethylubiquinone + NAD(+) + H2O. The protein operates within cofactor biosynthesis; ubiquinone biosynthesis. Its function is as follows. Catalyzes the hydroxylation of the 5-methoxy-2-methyl-3-(all-trans-polyprenyl)benzoquinone at the C6 position and participates in the biosynthesis of ubiquinone. Catalyzes the reaction through a substrate-mediated reduction pathway, whereby NADH shuttles electrons to 5-methoxy-2-methyl-3-(all-trans-decaprenyl)benzoquinone, which then transfers the electrons to the two Fe(3+) centers. The binding of 5-methoxy-2-methyl-3-(all-trans-polyprenyl)benzoquinone (DMQn) mediates reduction of the diiron center by nicotinamide adenine dinucleotide (NADH) and initiates oxygen activation for subsequent DMQ hydroxylation. The physiological substrates are 5-methoxy-2-methyl-3-(all-trans-nonaprenyl)benzoquinone (DMQ(9)) and 5-methoxy-2-methyl-3-(all-trans-decaprenyl)benzoquinone (DMQ(10)), however in vitro the enzyme does not have any specificity concerning the length of the polyprenyl tail, and accepts tails of various lengths with similar efficiency. Also has a structural role in the COQ enzyme complex, stabilizing other COQ polypeptides. Involved in lifespan determination in a ubiquinone-independent manner. Plays a role in modulating mitochondrial stress responses, acting in the nucleus, perhaps via regulating gene expression, independent of its characterized mitochondrial function in ubiquinone biosynthesis. This chain is NADPH-dependent 3-demethoxyubiquinone 3-hydroxylase, mitochondrial, found in Mus musculus (Mouse).